The primary structure comprises 456 residues: Ammonium transporter Amt2 (456 aa).

The next 11 helical transmembrane spans lie at 18–38 (LVWV…FAML), 61–81 (IGVI…AGLT), 109–129 (WLFG…AVAG), 141–161 (ILIA…GGFL), 170–190 (AGGM…AWII), 211–231 (ITFA…FNVG), 255–275 (VALV…GVAF), 281–301 (VDTL…TAIA), 304–324 (IVWP…PIVF), 339–359 (VFPV…VFAV), and 377–397 (VGVG…FGGF).

The protein belongs to the ammonia transporter channel (TC 1.A.11.2) family. In terms of assembly, homotrimer. Interacts with both GlnK1 and GlnK2 after ammonium shock.

The protein resides in the cell membrane. In terms of biological role, involved in the uptake of ammonium/ammonia (NH(4)(+)/NH(3)). Transport is electrogenic. The protein is Ammonium transporter Amt2 of Haloferax mediterranei (strain ATCC 33500 / DSM 1411 / JCM 8866 / NBRC 14739 / NCIMB 2177 / R-4) (Halobacterium mediterranei).